Consider the following 492-residue polypeptide: Nuclear autoantigenic sperm protein homolog (492 aa).

Positions 1–14 (MSAEAEAIVTTATA) are enriched in low complexity. Disordered stretches follow at residues 1–52 (MSAE…EQER) and 123–254 (DVPD…EEGV). Phosphothreonine occurs at positions 32 and 33. Positions 124 to 145 (VPDEAADDDDEDVDDDEEESAE) are enriched in acidic residues. 2 stretches are compositionally biased toward basic and acidic residues: residues 147–159 (GAAK…DTKE) and 170–179 (KELDTIKEGS). Residues Ser179 and Ser184 each carry the phosphoserine modification. The residue at position 185 (Thr185) is a Phosphothreonine. Ser193 is subject to Phosphoserine. The segment covering 226-238 (STSNGEVTASCSN) has biased composition (polar residues). Residues 244 to 253 (VEEEPEEEEG) show a composition bias toward acidic residues. TPR repeat units follow at residues 284–317 (AEVQ…HGEL) and 326–359 (AELH…IEEE). Positions 377–400 (MLDLEETKQEILAKIQEIEEMQAQ) form a coiled coil. The span at 418–459 (SGDAAAASSSSSSSANGAASSSSSSSKGAAAASSSTISSSSA) shows a compositional bias: low complexity. The interval 418–492 (SGDAAAASSS…LCSPAKRAAV (75 aa)) is disordered. Phosphoserine is present on residues Ser478 and Ser485.

It belongs to the NASP family. Interacts with the histone H3-H4 heterodimer; the interaction with H4 is probably indirect and mediated by H3 (His3, His3.3A and His3.3B). Interacts with His2Av; this interaction directly or indirectly destabilizes His2Av.

The protein localises to the cytoplasm. Its subcellular location is the nucleus. It localises to the perinuclear region. Component of the histone chaperone network. Binds and stabilizes histone H3-H4 not bound to chromatin to maintain a soluble reservoir and modulate degradation by chaperone-mediated autophagy. May also bind and stabilize monomeric H3. Maternal effect gene essential for early embryogenesis. The protein is Nuclear autoantigenic sperm protein homolog of Drosophila melanogaster (Fruit fly).